Here is a 71-residue protein sequence, read N- to C-terminus: Small ribosomal subunit protein bS21 (71 aa).

This sequence belongs to the bacterial ribosomal protein bS21 family.

The polypeptide is Small ribosomal subunit protein bS21 (Wigglesworthia glossinidia brevipalpis).